The following is a 1849-amino-acid chain: Mitogen-activated protein kinase kinase kinase mkh1 (1849 aa).

A Protein kinase domain is found at 1556–1825 (WFKGQLIGKG…TKLLAEHPFC (270 aa)). Residues 1562-1570 (IGKGTYGRV) and K1585 each bind ATP. The active-site Proton acceptor is D1686.

This sequence belongs to the protein kinase superfamily. STE Ser/Thr protein kinase family. MAP kinase kinase kinase subfamily.

It catalyses the reaction L-seryl-[protein] + ATP = O-phospho-L-seryl-[protein] + ADP + H(+). The enzyme catalyses L-threonyl-[protein] + ATP = O-phospho-L-threonyl-[protein] + ADP + H(+). In terms of biological role, mitogen-activated protein kinase kinase kinase, part of the mkh1-mkk1-spm1 MAPK cascade that regulates vegetative growth, conidial formation, colony surface hydrophobicity, osmotic stress, cell wall integrity maintenance, carbon and nitrogen source utilization, chitin distribution, septa formation, and pathogenicity. This is Mitogen-activated protein kinase kinase kinase mkh1 from Cytospora mali (Apple Valsa canker fungus).